Consider the following 165-residue polypeptide: Transcriptional regulator MraZ (165 aa).

2 consecutive SpoVT-AbrB domains span residues threonine 5–leucine 51 and serine 80–arginine 123.

It belongs to the MraZ family. In terms of assembly, forms oligomers.

It is found in the cytoplasm. The protein localises to the nucleoid. In Hyphomonas neptunium (strain ATCC 15444), this protein is Transcriptional regulator MraZ.